The following is a 309-amino-acid chain: THO complex subunit Tho3 (309 aa).

6 WD repeats span residues Gly-22 to Thr-61, Gly-65 to Glu-107, Glu-109 to Thr-148, Ala-192 to Ser-231, Arg-234 to Lys-273, and Pro-275 to Leu-309.

The protein belongs to the THOC3 family. In terms of assembly, component of the transcription/export (TREX) complex, which is at least is formed of SUB2, TEX1 and YRA1 and the THO complex composed of HPR1, MFT1, THO2 and THP1.

It is found in the nucleus. In terms of biological role, component of the TREX complex, which operates in coupling transcription elongation to mRNA export. In Schizosaccharomyces pombe (strain 972 / ATCC 24843) (Fission yeast), this protein is THO complex subunit Tho3 (THO3).